The primary structure comprises 348 residues: Dihydroorotase (348 aa).

Zn(2+) contacts are provided by H17 and H19. Substrate-binding positions include 19 to 21 (HLR) and N45. Residues K103, H140, and H178 each contribute to the Zn(2+) site. An N6-carboxylysine modification is found at K103. H140 lines the substrate pocket. A substrate-binding site is contributed by L223. D251 serves as a coordination point for Zn(2+). Residue D251 is part of the active site. Substrate is bound by residues H255 and A267.

This sequence belongs to the metallo-dependent hydrolases superfamily. DHOase family. Class II DHOase subfamily. As to quaternary structure, homodimer. Zn(2+) serves as cofactor.

The catalysed reaction is (S)-dihydroorotate + H2O = N-carbamoyl-L-aspartate + H(+). Its pathway is pyrimidine metabolism; UMP biosynthesis via de novo pathway; (S)-dihydroorotate from bicarbonate: step 3/3. Functionally, catalyzes the reversible cyclization of carbamoyl aspartate to dihydroorotate. The sequence is that of Dihydroorotase from Salmonella typhi.